Reading from the N-terminus, the 153-residue chain is MKKNIALFAGSFDPFTRGHADIVERSLAIFDEVIIAIGINEQKRTLFSAERRQEQIARYYASRPAIGVITYSGLTVDLVRQTGATALVRGIRSGSDFEYERTLADLNRHLSGVDTVLLCTDTRLSFISSSAVRELISFGRDVSDFLPEGFVLD.

Ser-11 is a substrate binding site. ATP-binding positions include 11 to 12 and His-19; that span reads SF. Residues Lys-43, Thr-75, and Arg-89 each contribute to the substrate site. Residues 90–92, Glu-100, and 124–130 each bind ATP; these read GIR and LSFISSS.

This sequence belongs to the bacterial CoaD family. In terms of assembly, homohexamer. It depends on Mg(2+) as a cofactor.

Its subcellular location is the cytoplasm. The catalysed reaction is (R)-4'-phosphopantetheine + ATP + H(+) = 3'-dephospho-CoA + diphosphate. It functions in the pathway cofactor biosynthesis; coenzyme A biosynthesis; CoA from (R)-pantothenate: step 4/5. Reversibly transfers an adenylyl group from ATP to 4'-phosphopantetheine, yielding dephospho-CoA (dPCoA) and pyrophosphate. This Porphyromonas gingivalis (strain ATCC 33277 / DSM 20709 / CIP 103683 / JCM 12257 / NCTC 11834 / 2561) protein is Phosphopantetheine adenylyltransferase.